A 624-amino-acid chain; its full sequence is Alpha-galactosidase 3 (624 aa).

Positions 1 to 22 are cleaved as a signal peptide; sequence MSPSAAVLIPLAAAVLLRPVVG. N-linked (GlcNAc...) asparagine glycans are attached at residues N37, N56, N197, N259, and N293. D347 acts as the Nucleophile in catalysis. A glycan (N-linked (GlcNAc...) asparagine) is linked at N393. Residue D412 is the Proton donor of the active site. N-linked (GlcNAc...) asparagine glycosylation is present at N469.

Belongs to the glycosyl hydrolase 27 family.

Its subcellular location is the secreted. It catalyses the reaction Hydrolysis of terminal, non-reducing alpha-D-galactose residues in alpha-D-galactosides, including galactose oligosaccharides, galactomannans and galactolipids.. Alpha-galactosidase involved in the degradation of simple oligosaccharides like melibiose, raffinose and stachyose, and of polymeric galacto(gluco)mannans. The protein is Alpha-galactosidase 3 (agl3) of Hypocrea jecorina (Trichoderma reesei).